The following is a 616-amino-acid chain: MPKYRSATTTHGRNMAGARALWRATGMTDADFGKPIIAVVNSFTQFVPGHVHLRDLGRLVAAQIEATGGVAKEFNTIAVDDGIAMGHGGMLYSLPSRELIADSVEYMVNAHCADAMVCISNCDKITPGMMMAALRLNIPVIFVSGGPMEAGKTKLSDRLIKLDLVDAMIQGANPQVSDAQSEQIERAACPTCGSCSGMFTANSMNCLTEALGLALPGNGSLLATHADRRALFEEAGQRIVALTRRYYEQDDVSVLPRSIACKAAFENAMTLDIAMGGSTNTVLHLLAAAQEGEIDFTLADIDRLSRQVPHLCKVAPSTPDYHMEDVHRAGGVMGILGELDRAGLLNRGVANVLGLGLSETLARYDIMRSDDDALQRLYRAGPAGLRTVEPFAQSCRWDALDRDRQQGCIRAREHAYSQDGGLAVLSGNLAQDGCIVKTAGVDPDSLVFRGPARVFESQEEAVEAILGGRIHPGDVLVIRYEGPKGGPGMQEMLYPTAYLKSMGLGKQCALITDGRFSGGTSGLSIGHVSPEAASGGAIALVRDGDPIEIDIPVRHIRLAIAESELALRRQQELARGTQAWTPRDRRRKVSLALRAYASLATSADRGAVRDRAKLGG.

Position 81 (Asp-81) interacts with Mg(2+). Cys-122 provides a ligand contact to [2Fe-2S] cluster. Mg(2+) is bound by residues Asp-123 and Lys-124. The residue at position 124 (Lys-124) is an N6-carboxylysine. Cys-195 contributes to the [2Fe-2S] cluster binding site. Glu-491 provides a ligand contact to Mg(2+). Residue Ser-517 is the Proton acceptor of the active site.

This sequence belongs to the IlvD/Edd family. Homodimer. Requires [2Fe-2S] cluster as cofactor. It depends on Mg(2+) as a cofactor.

It catalyses the reaction (2R)-2,3-dihydroxy-3-methylbutanoate = 3-methyl-2-oxobutanoate + H2O. It carries out the reaction (2R,3R)-2,3-dihydroxy-3-methylpentanoate = (S)-3-methyl-2-oxopentanoate + H2O. It functions in the pathway amino-acid biosynthesis; L-isoleucine biosynthesis; L-isoleucine from 2-oxobutanoate: step 3/4. The protein operates within amino-acid biosynthesis; L-valine biosynthesis; L-valine from pyruvate: step 3/4. Its function is as follows. Functions in the biosynthesis of branched-chain amino acids. Catalyzes the dehydration of (2R,3R)-2,3-dihydroxy-3-methylpentanoate (2,3-dihydroxy-3-methylvalerate) into 2-oxo-3-methylpentanoate (2-oxo-3-methylvalerate) and of (2R)-2,3-dihydroxy-3-methylbutanoate (2,3-dihydroxyisovalerate) into 2-oxo-3-methylbutanoate (2-oxoisovalerate), the penultimate precursor to L-isoleucine and L-valine, respectively. The polypeptide is Dihydroxy-acid dehydratase (Edwardsiella ictaluri (strain 93-146)).